Here is a 308-residue protein sequence, read N- to C-terminus: Thymidylate synthase (308 aa).

Residues Arg26 and 170–171 contribute to the dUMP site; that span reads RR. Cys190 serves as the catalytic Nucleophile. Residues 210 to 213, Asn221, and 251 to 253 contribute to the dUMP site; these read RSCD and HVY. Residue Asp213 participates in (6R)-5,10-methylene-5,6,7,8-tetrahydrofolate binding. (6R)-5,10-methylene-5,6,7,8-tetrahydrofolate is bound at residue Ala307.

The protein belongs to the thymidylate synthase family. Bacterial-type ThyA subfamily. Homodimer.

It localises to the cytoplasm. The enzyme catalyses dUMP + (6R)-5,10-methylene-5,6,7,8-tetrahydrofolate = 7,8-dihydrofolate + dTMP. Its pathway is pyrimidine metabolism; dTTP biosynthesis. Functionally, catalyzes the reductive methylation of 2'-deoxyuridine-5'-monophosphate (dUMP) to 2'-deoxythymidine-5'-monophosphate (dTMP) while utilizing 5,10-methylenetetrahydrofolate (mTHF) as the methyl donor and reductant in the reaction, yielding dihydrofolate (DHF) as a by-product. This enzymatic reaction provides an intracellular de novo source of dTMP, an essential precursor for DNA biosynthesis. In Rhizorhabdus wittichii (strain DSM 6014 / CCUG 31198 / JCM 15750 / NBRC 105917 / EY 4224 / RW1) (Sphingomonas wittichii), this protein is Thymidylate synthase.